We begin with the raw amino-acid sequence, 316 residues long: Ribosomal RNA small subunit methyltransferase H (316 aa).

S-adenosyl-L-methionine is bound by residues 35–37 (SGH), Asp-55, Phe-84, Asp-105, and Gln-112.

Belongs to the methyltransferase superfamily. RsmH family.

The protein localises to the cytoplasm. The catalysed reaction is cytidine(1402) in 16S rRNA + S-adenosyl-L-methionine = N(4)-methylcytidine(1402) in 16S rRNA + S-adenosyl-L-homocysteine + H(+). In terms of biological role, specifically methylates the N4 position of cytidine in position 1402 (C1402) of 16S rRNA. The sequence is that of Ribosomal RNA small subunit methyltransferase H from Streptococcus equi subsp. zooepidemicus (strain H70).